A 516-amino-acid polypeptide reads, in one-letter code: MAVWQAASGKVYLPPSTPVARVQSTDEYVQRTNIYYHAYSDRLLTVGHPYFNIYDIQGTKIKVPKVSGNQHRVFRLKLPDPNRFALADMSVYNPDKERLVWGCRGIEIGRGQPLGVGSVGHPLFNKLGDTENPNSYKGNSTDDRQNVSFDPKQLQMFIIGCAPCLGEHWDRALPCADDVPNPGSCPPIELKNTAIQDGDMADIGYGNLNFKALQENRADVSLDIVNETCKYPDFLKMQNDVYGDSCFFYARREQCYARHFFVRGGKTGDDIPAGQIDEGSMKNAFYIPPVNNQAQNNLGNSMYFPTVSGSLVSSDAQLFNRPFWLQRAQGHNNGICWFNQLFVTVVDNTRNTNFSISVHSENTDVSKIQNYDSQKFQEYLRHVEEYEISLILQLCKVPLTAEVLAQINAMNSNILEEWQLGFVPAPDNPIHDTYRYINSAATRCPDKNPPKEREDPYKDLNFWNVDLSERLSLELDQYSLGRKFLFQAGLQQATVNGTKTVSSKLSTRGVKRKRKQ.

This sequence belongs to the papillomaviridae L1 protein family. In terms of assembly, self-assembles into homopentamers. The capsid has an icosahedral symmetry and consists of 72 capsomers, with each capsomer being a pentamer of L1. Interacts with the minor capsid protein L2; this interaction is necessary for viral genome encapsidation. Interacts with protein E2; this interaction enhances E2-dependent replication and transcription activation.

It localises to the virion. Its subcellular location is the host nucleus. Functionally, forms an icosahedral capsid with a T=7 symmetry and a 50 nm diameter. The capsid is composed of 72 pentamers linked to each other by disulfide bonds and associated with L2 proteins. Binds to heparan sulfate proteoglycans on cell surface of basal layer keratinocytes to provide initial virion attachment. This binding mediates a conformational change in the virus capsid that facilitates efficient infection. The virion enters the host cell via endocytosis. During virus trafficking, L1 protein dissociates from the viral DNA and the genomic DNA is released to the host nucleus. The virion assembly takes place within the cell nucleus. Encapsulates the genomic DNA together with protein L2. In Homo sapiens (Human), this protein is Major capsid protein L1.